We begin with the raw amino-acid sequence, 364 residues long: tRNA 2-selenouridine synthase (364 aa).

Positions 14 to 136 (VLNNTPLIDV…AFRNWLMQET (123 aa)) constitute a Rhodanese domain. Residue cysteine 97 is the S-selanylcysteine intermediate of the active site.

This sequence belongs to the SelU family. In terms of assembly, monomer.

The catalysed reaction is 5-methylaminomethyl-2-thiouridine(34) in tRNA + selenophosphate + (2E)-geranyl diphosphate + H2O + H(+) = 5-methylaminomethyl-2-selenouridine(34) in tRNA + (2E)-thiogeraniol + phosphate + diphosphate. It catalyses the reaction 5-methylaminomethyl-2-thiouridine(34) in tRNA + (2E)-geranyl diphosphate = 5-methylaminomethyl-S-(2E)-geranyl-thiouridine(34) in tRNA + diphosphate. It carries out the reaction 5-methylaminomethyl-S-(2E)-geranyl-thiouridine(34) in tRNA + selenophosphate + H(+) = 5-methylaminomethyl-2-(Se-phospho)selenouridine(34) in tRNA + (2E)-thiogeraniol. The enzyme catalyses 5-methylaminomethyl-2-(Se-phospho)selenouridine(34) in tRNA + H2O = 5-methylaminomethyl-2-selenouridine(34) in tRNA + phosphate. In terms of biological role, involved in the post-transcriptional modification of the uridine at the wobble position (U34) of tRNA(Lys), tRNA(Glu) and tRNA(Gln). Catalyzes the conversion of 2-thiouridine (S2U-RNA) to 2-selenouridine (Se2U-RNA). Acts in a two-step process involving geranylation of 2-thiouridine (S2U) to S-geranyl-2-thiouridine (geS2U) and subsequent selenation of the latter derivative to 2-selenouridine (Se2U) in the tRNA chain. In Sulfurovum sp. (strain NBC37-1), this protein is tRNA 2-selenouridine synthase.